We begin with the raw amino-acid sequence, 185 residues long: Ribosome-recycling factor (185 aa).

This sequence belongs to the RRF family.

The protein localises to the cytoplasm. Its function is as follows. Responsible for the release of ribosomes from messenger RNA at the termination of protein biosynthesis. May increase the efficiency of translation by recycling ribosomes from one round of translation to another. The sequence is that of Ribosome-recycling factor from Alkalilimnicola ehrlichii (strain ATCC BAA-1101 / DSM 17681 / MLHE-1).